A 327-amino-acid polypeptide reads, in one-letter code: Tetraacyldisaccharide 4'-kinase (327 aa).

54-61 (TTGGTGKT) contacts ATP. The disordered stretch occupies residues 78 to 106 (PHILSRGHGGRERGPIGVNPNRSTPRDVG).

It belongs to the LpxK family.

It catalyses the reaction a lipid A disaccharide + ATP = a lipid IVA + ADP + H(+). It participates in glycolipid biosynthesis; lipid IV(A) biosynthesis; lipid IV(A) from (3R)-3-hydroxytetradecanoyl-[acyl-carrier-protein] and UDP-N-acetyl-alpha-D-glucosamine: step 6/6. Transfers the gamma-phosphate of ATP to the 4'-position of a tetraacyldisaccharide 1-phosphate intermediate (termed DS-1-P) to form tetraacyldisaccharide 1,4'-bis-phosphate (lipid IVA). The chain is Tetraacyldisaccharide 4'-kinase from Gluconobacter oxydans (strain 621H) (Gluconobacter suboxydans).